The primary structure comprises 50 residues: ADPQHLCGSHLVDALYLVCGDRGFFYNPKGIVEQCCHRPCNIRVLENYCN.

3 disulfides stabilise this stretch: C7-C36, C19-C49, and C35-C40.

This sequence belongs to the insulin family. Heterodimer of a B chain and an A chain linked by two disulfide bonds.

The protein resides in the secreted. Insulin decreases blood glucose concentration. It increases cell permeability to monosaccharides, amino acids and fatty acids. It accelerates glycolysis, the pentose phosphate cycle, and glycogen synthesis in liver. This Myoxocephalus scorpius (Shorthorn sculpin) protein is Insulin (ins).